We begin with the raw amino-acid sequence, 330 residues long: MNFIDEVKICIKGGNGGNGCVSFHREKFIDRGGPDGGDGGRGGSVIFRSNHHLNTLVNYRYKQHFTAENGENGKGSNRSGKSGKSLALDVPIGTQIFSEDGNILLHDFTEDDQSFEIIKGGSGGLGNSHFKTSVNQAPRKRTEGEIAEEMWIHLSLKLLSDVGLVGLPNAGKSTFLSVVTAAKPKIADYPFTTLVPNLGVVYVDDEEFVIADIPGLIEGAHQGHGLGDKFLKHIERCNVLIHLIDGSSNDVMADYNTVRLELESYSDYLKNKIEIICLNKCDVLTDEEIQEKINELQKATNKEVFPISTYTNLGVNKIVKLALKTIKNQE.

In terms of domain architecture, Obg spans 1–159 (MNFIDEVKIC…MWIHLSLKLL (159 aa)). In terms of domain architecture, OBG-type G spans 160-327 (SDVGLVGLPN…IVKLALKTIK (168 aa)). GTP is bound by residues 166–173 (GLPNAGKS), 191–195 (FTTLV), 212–215 (DIPG), 279–282 (NKCD), and 308–310 (STY). Positions 173 and 193 each coordinate Mg(2+).

This sequence belongs to the TRAFAC class OBG-HflX-like GTPase superfamily. OBG GTPase family. In terms of assembly, monomer. It depends on Mg(2+) as a cofactor.

The protein resides in the cytoplasm. Its function is as follows. An essential GTPase which binds GTP, GDP and possibly (p)ppGpp with moderate affinity, with high nucleotide exchange rates and a fairly low GTP hydrolysis rate. Plays a role in control of the cell cycle, stress response, ribosome biogenesis and in those bacteria that undergo differentiation, in morphogenesis control. The sequence is that of GTPase Obg from Rickettsia felis (strain ATCC VR-1525 / URRWXCal2) (Rickettsia azadi).